The sequence spans 243 residues: Ras-related protein Rab-12 (243 aa).

The residue at position 1 (M1) is an N-acetylmethionine. Residues 1–36 (MDPSAALHRRPAGGSLGAVSPALSGGQARRRKQPPR) form a disordered region. 3 positions are modified to phosphoserine: S15, S20, and S24. GTP-binding residues include G51, V52, G53, K54, T55, S72, and T73. Residue T55 participates in Mg(2+) binding. Short sequence motifs (switch) lie at residues 64-78 (DTFC…GVDF) and 96-113 (DTAG…YYRS). Mg(2+)-binding residues include T73 and D96. Residue G99 coordinates GTP. S105 carries the phosphoserine; by LRRK2 modification. GTP-binding residues include N154, K155, D157, S185, A186, and K187. Residues C242 and C243 are each lipidated (S-geranylgeranyl cysteine).

The protein belongs to the small GTPase superfamily. Rab family. As to quaternary structure, interacts with RABIF and OPTN. Interacts with LRRK2; interaction facilitates phosphorylation of Ser-105. Interacts with GDI1, GDI2, CHM and CHML; these interactions are disrupted by phosphorylation on Ser-105. Interacts with RILPL1 and RILPL2; these interactions are dependent on phosphorylation of Ser-105. Mg(2+) serves as cofactor. Phosphorylation of Ser-105 in the switch II region by LRRK2 prevents the association of RAB regulatory proteins, including CHM, CHML and RAB GDP dissociation inhibitors GDI1 and GDI2. In terms of tissue distribution, ubiquitously expressed.

Its subcellular location is the recycling endosome membrane. The protein localises to the lysosome membrane. The protein resides in the golgi apparatus membrane. It localises to the cytoplasmic vesicle. It is found in the autophagosome. It catalyses the reaction GTP + H2O = GDP + phosphate + H(+). Its activity is regulated as follows. Regulated by guanine nucleotide exchange factors (GEFs) including DENND3 which promote the exchange of bound GDP for free GTP. Regulated by GTPase activating proteins (GAPs) which increase the GTP hydrolysis activity. Inhibited by GDP dissociation inhibitors (GDIs). Its function is as follows. The small GTPases Rab are key regulators of intracellular membrane trafficking, from the formation of transport vesicles to their fusion with membranes. Rabs cycle between an inactive GDP-bound form and an active GTP-bound form that is able to recruit to membranes different set of downstream effectors directly responsible for vesicle formation, movement, tethering and fusion. RAB12 may play a role in protein transport from recycling endosomes to lysosomes regulating, for instance, the degradation of the transferrin receptor. Involved in autophagy. The chain is Ras-related protein Rab-12 from Mus musculus (Mouse).